The sequence spans 126 residues: Large ribosomal subunit protein eL18 (126 aa).

Belongs to the eukaryotic ribosomal protein eL18 family.

In Methanosarcina mazei (strain ATCC BAA-159 / DSM 3647 / Goe1 / Go1 / JCM 11833 / OCM 88) (Methanosarcina frisia), this protein is Large ribosomal subunit protein eL18.